Here is a 154-residue protein sequence, read N- to C-terminus: Large ribosomal subunit protein uL23y (154 aa).

Belongs to the universal ribosomal protein uL23 family.

Functionally, binds to a specific region on the 26S rRNA. The polypeptide is Large ribosomal subunit protein uL23y (RPL23AB) (Arabidopsis thaliana (Mouse-ear cress)).